A 300-amino-acid chain; its full sequence is Cyclic nucleotide synthase CdnE01 (300 aa).

Mg(2+)-binding residues include D63, D65, and D137.

It belongs to the CD-NTase family. E01 subfamily. It depends on Mg(2+) as a cofactor.

With respect to regulation, binds to and probably activated by a virus-derived, approximately 400 nucleotide RNA (called CBASS-activating bacteriophage RNA, cabRNA) that begins in the viral terminase subunit terS and extends into terL, as well as by a shorter RNA with part of the cabRNA sequence able to form a hairpin. RNA secondary and/or tertiary structure, as well as viral infection itself, are important for CdnE activation. Functionally, cyclic nucleotide synthase (second messenger synthase) of a CBASS antivirus system. CBASS (cyclic oligonucleotide-based antiphage signaling system) provides immunity against bacteriophage. The CD-NTase protein synthesizes cyclic nucleotides in response to infection; these serve as specific second messenger signals. The signals activate a diverse range of effectors, leading to bacterial cell death and thus abortive phage infection. A type I-B CBASS system. Its function is as follows. Protects S.aureus against phage infection. When the CBASS operon (cdnE and the following gene) is introduced in S.aureus strain RN4220 there is strong protection against lytic DNA phages 80alpha-vir and phi-NM1-gamma-6 but little to no protection against phages phi-NM4-gamma-4 or phi-12-gamma-3. The chain is Cyclic nucleotide synthase CdnE01 from Staphylococcus haemolyticus.